The primary structure comprises 453 residues: MASPSLPGSDCSQIIDHSHVPEFEVATWIKITLILVYLIIFVMGLLGNSATIRVTQVLQKKGYLQKEVTDHMVSLACSDILVFLIGMPMEFYSIIWNPLTTSSYTLSCKLHTFLFEACSYATLLHVLTLSFERYIAICHPFRYKAVSGPCQVKLLIGFVWVTSALVALPLLFAMGTEYPLVNVPSHRGLTCNRSSTRHHEQPETSNMSICTNLSSRWTVFQSSIFGAFVVYLVVLLSVAFMCWNMMQVLMKSQKGSLAGGTRPPQLRKSESEESRTARRQTIIFLRLIVVTLAVCWMPNQIRRIMAAAKPKHDWTRSYFRAYMILLPFSETFFYLSSVINPLLYTVSSQQFRRVFVQVLCCRLSLQHANHEKRLRVHAHSTTDSARFVQRPLLFASRRQSSARRTEKIFLSTFQSEAEPQSKSQSLSLESLEPNSGAKPANSAAENGFQEHEV.

Residues 1-34 lie on the Extracellular side of the membrane; it reads MASPSLPGSDCSQIIDHSHVPEFEVATWIKITLI. 2 disulfides stabilise this stretch: Cys-11-Cys-191 and Cys-108-Cys-210. Residues His-17 and His-19 each contribute to the Zn(2+) site. A helical transmembrane segment spans residues 35 to 55; it reads LVYLIIFVMGLLGNSATIRVT. The Cytoplasmic segment spans residues 56–69; the sequence is QVLQKKGYLQKEVT. Residues 70–89 traverse the membrane as a helical segment; it reads DHMVSLACSDILVFLIGMPM. Topologically, residues 90–109 are extracellular; sequence EFYSIIWNPLTTSSYTLSCK. A helical membrane pass occupies residues 110 to 131; it reads LHTFLFEACSYATLLHVLTLSF. Residues 132–151 lie on the Cytoplasmic side of the membrane; sequence ERYIAICHPFRYKAVSGPCQ. The chain crosses the membrane as a helical span at residues 152–172; it reads VKLLIGFVWVTSALVALPLLF. At 173-217 the chain is on the extracellular side; sequence AMGTEYPLVNVPSHRGLTCNRSSTRHHEQPETSNMSICTNLSSRW. Residues Asn-192, Asn-206, and Asn-212 are each glycosylated (N-linked (GlcNAc...) asparagine). A helical membrane pass occupies residues 218–242; that stretch reads TVFQSSIFGAFVVYLVVLLSVAFMC. Over 243–283 the chain is Cytoplasmic; sequence WNMMQVLMKSQKGSLAGGTRPPQLRKSESEESRTARRQTII. Residues 255 to 274 form a disordered region; the sequence is GSLAGGTRPPQLRKSESEES. Residues 284–305 traverse the membrane as a helical segment; that stretch reads FLRLIVVTLAVCWMPNQIRRIM. Residues 306 to 323 are Extracellular-facing; the sequence is AAAKPKHDWTRSYFRAYM. Residues 324-344 traverse the membrane as a helical segment; that stretch reads ILLPFSETFFYLSSVINPLLY. Residues 345–453 are Cytoplasmic-facing; sequence TVSSQQFRRV…AENGFQEHEV (109 aa). Ser-396 is modified (phosphoserine). The tract at residues 415 to 453 is disordered; the sequence is SEAEPQSKSQSLSLESLEPNSGAKPANSAAENGFQEHEV. The span at 418-435 shows a compositional bias: low complexity; sequence EPQSKSQSLSLESLEPNS.

Belongs to the G-protein coupled receptor 1 family. In terms of assembly, interacts with HTR1A. Interacts with GALR1. In terms of tissue distribution, expressed in many tissues, including the stomach, intestine and hypothalamus.

Its subcellular location is the cell membrane. Its function is as follows. Zinc-sensing receptor that can sense changes in extracellular Zn(2+), mediate Zn(2+) signal transmission, and participates in the regulation of numerous physiological processes including glucose homeostasis regulation, gastrointestinal mobility, hormone secretion and cell death. Activation by Zn(2+) in keratinocytes increases the intracellular concentration of Ca(2+) and activates the ERK/MAPK and PI3K/AKT signaling pathways leading to epithelial repair. Plays an essential role in normal wound healing by inducing the production of cytokines including the major inflammatory cytokine IL6 via the PKC/MAPK/CEBPB pathway. Regulates adipose tissue metabolism, especially lipolysis, and regulates the function of lipases, such as hormone-sensitive lipase and adipose triglyceride lipase. Plays a role in the inhibition of cell death and protects against oxidative, endoplasmic reticulum and mitochondrial stress by inducing secretion of the cytoprotective pigment epithelium-derived growth factor (PEDF) and probably other protective transcripts in a GNA13/RHOA/SRE-dependent manner. Forms dynamic heteroreceptor complexes with HTR1A and GALR1 depending on cell type or specific physiological states, resulting in signaling diversity: HTR1A-GPR39 shows additive increase in signaling along the serum response element (SRE) and NF-kappa-B pathways while GALR1 acts as an antagonist blocking SRE. The protein is G-protein coupled receptor 39 (GPR39) of Homo sapiens (Human).